A 730-amino-acid polypeptide reads, in one-letter code: Elongation factor 2 (730 aa).

The 210-residue stretch at 19–228 (TKIRNIGIVA…TGVSFKDVYD (210 aa)) folds into the tr-type G domain. GTP is bound by residues 28–35 (AHIDHGKT), 94–98 (DTPGH), and 148–151 (NKVD). The residue at position 596 (histidine 596) is a Diphthamide.

Belongs to the TRAFAC class translation factor GTPase superfamily. Classic translation factor GTPase family. EF-G/EF-2 subfamily.

It is found in the cytoplasm. Catalyzes the GTP-dependent ribosomal translocation step during translation elongation. During this step, the ribosome changes from the pre-translocational (PRE) to the post-translocational (POST) state as the newly formed A-site-bound peptidyl-tRNA and P-site-bound deacylated tRNA move to the P and E sites, respectively. Catalyzes the coordinated movement of the two tRNA molecules, the mRNA and conformational changes in the ribosome. This is Elongation factor 2 from Methanosarcina barkeri (strain Fusaro / DSM 804).